Consider the following 132-residue polypeptide: Small ribosomal subunit protein uS8 (132 aa).

The protein belongs to the universal ribosomal protein uS8 family. Part of the 30S ribosomal subunit. Contacts proteins S5 and S12.

In terms of biological role, one of the primary rRNA binding proteins, it binds directly to 16S rRNA central domain where it helps coordinate assembly of the platform of the 30S subunit. In Bacillus subtilis (strain 168), this protein is Small ribosomal subunit protein uS8.